We begin with the raw amino-acid sequence, 189 residues long: GTPase NRas (189 aa).

GTP is bound by residues 10–18 and 29–30; these read GAGGVGKSA and VD. An Effector region motif is present at residues 32-40; it reads YDPTIEDSY. 57 to 61 serves as a coordination point for GTP; it reads DTAGQ. Phosphoserine is present on serine 89. A GTP-binding site is contributed by 116–119; sequence NKCD. The hypervariable region stretch occupies residues 166 to 185; the sequence is YRMKKLNSSDDGTQGCLGLS. Residue lysine 170 forms a Glycyl lysine isopeptide (Lys-Gly) (interchain with G-Cter in ubiquitin) linkage. The S-palmitoyl cysteine moiety is linked to residue cysteine 181. A lipid anchor (S-farnesyl cysteine) is attached at cysteine 186. The propeptide at 187 to 189 is removed in mature form; the sequence is AVM.

This sequence belongs to the small GTPase superfamily. Ras family. As to quaternary structure, interacts (active GTP-bound form preferentially) with RGS14. Interacts (active GTP-bound form) with RASSF7. Interacts (active GTP-bound form) with both SHOC2 and PP1c (all isoforms) to form a tertiary complex; SHOC2 and PP1c preferably bind M-Ras/MRAS, but they also bind K-Ras/KRAS, N-Ras/NRAS and H-Ras/HRAS. Post-translationally, palmitoylated by the ZDHHC9-GOLGA7 complex. Depalmitoylated by ABHD17A, ABHD17B and ABHD17C. A continuous cycle of de- and re-palmitoylation regulates rapid exchange between plasma membrane and Golgi. Acetylation at Lys-104 prevents interaction with guanine nucleotide exchange factors (GEFs). In terms of processing, ubiquitinated by the BCR(LZTR1) E3 ubiquitin ligase complex at Lys-170 in a non-degradative manner, leading to inhibit Ras signaling by decreasing Ras association with membranes. Post-translationally, phosphorylation at Ser-89 enhances NRAS association with its downstream effectors.

It localises to the cell membrane. The protein resides in the golgi apparatus membrane. It carries out the reaction GTP + H2O = GDP + phosphate + H(+). Its activity is regulated as follows. Alternates between an inactive form bound to GDP and an active form bound to GTP. Activated by a guanine nucleotide-exchange factor (GEF) and inactivated by a GTPase-activating protein (GAP). In terms of biological role, ras proteins bind GDP/GTP and possess intrinsic GTPase activity. The sequence is that of GTPase NRas (NRAS) from Monodelphis domestica (Gray short-tailed opossum).